We begin with the raw amino-acid sequence, 85 residues long: Fungal defensin triintsin (85 aa).

Positions 1–21 (MQFTKLATVLIVSLMGSAAIA) are cleaved as a signal peptide. Positions 22-47 (APSVDNAPAVAAEEVAAAPAENLEKR) are excised as a propeptide. Cystine bridges form between Cys-51/Cys-72, Cys-58/Cys-80, and Cys-62/Cys-82.

The protein belongs to the invertebrate defensin family. Disulfide bonds are essential for antimicrobial activity.

Its subcellular location is the secreted. Antimicrobial peptide with broad-spectrum activity against Gram-positive bacteria, Gram-negative bacteria, and fungi. Also inhibits clinical isolates, including methicillin-resistant S.aureus (MRSA) (MIC=32 uM), K.pneumoniae, C.albicans and C.parapsilosis. Displays minimal inhibitory concentration (MIC) values similar to minimal bactericidal concentrations (MBC), suggesting a disruptive mechanism mode of action associated with membrane lysis. In vitro, shows hemolytic activity against human red blood cells. In Trichophyton interdigitale (strain MR816), this protein is Fungal defensin triintsin.